Here is a 176-residue protein sequence, read N- to C-terminus: Acireductone dioxygenase (176 aa).

The disordered stretch occupies residues 1–21 (MKAYWYDNKPGDQREPHDSGR). Residues 9–20 (KPGDQREPHDSG) show a composition bias toward basic and acidic residues. Fe(2+) contacts are provided by His81, His83, Glu87, and His126. 4 residues coordinate Ni(2+): His81, His83, Glu87, and His126.

The protein belongs to the acireductone dioxygenase (ARD) family. Requires Fe(2+) as cofactor. Ni(2+) serves as cofactor.

It localises to the cytoplasm. Its subcellular location is the nucleus. It catalyses the reaction 1,2-dihydroxy-5-(methylsulfanyl)pent-1-en-3-one + O2 = 4-methylsulfanyl-2-oxobutanoate + formate + 2 H(+). The enzyme catalyses 1,2-dihydroxy-5-(methylsulfanyl)pent-1-en-3-one + O2 = 3-(methylsulfanyl)propanoate + CO + formate + 2 H(+). Its pathway is amino-acid biosynthesis; L-methionine biosynthesis via salvage pathway; L-methionine from S-methyl-5-thio-alpha-D-ribose 1-phosphate: step 5/6. Catalyzes 2 different reactions between oxygen and the acireductone 1,2-dihydroxy-3-keto-5-methylthiopentene (DHK-MTPene) depending upon the metal bound in the active site. Fe-containing acireductone dioxygenase (Fe-ARD) produces formate and 2-keto-4-methylthiobutyrate (KMTB), the alpha-ketoacid precursor of methionine in the methionine recycle pathway. Ni-containing acireductone dioxygenase (Ni-ARD) produces methylthiopropionate, carbon monoxide and formate, and does not lie on the methionine recycle pathway. The polypeptide is Acireductone dioxygenase (adi1) (Aspergillus fumigatus (strain ATCC MYA-4609 / CBS 101355 / FGSC A1100 / Af293) (Neosartorya fumigata)).